Here is a 205-residue protein sequence, read N- to C-terminus: ATP phosphoribosyltransferase (205 aa).

Belongs to the ATP phosphoribosyltransferase family. Short subfamily. As to quaternary structure, heteromultimer composed of HisG and HisZ subunits.

It is found in the cytoplasm. The catalysed reaction is 1-(5-phospho-beta-D-ribosyl)-ATP + diphosphate = 5-phospho-alpha-D-ribose 1-diphosphate + ATP. It functions in the pathway amino-acid biosynthesis; L-histidine biosynthesis; L-histidine from 5-phospho-alpha-D-ribose 1-diphosphate: step 1/9. In terms of biological role, catalyzes the condensation of ATP and 5-phosphoribose 1-diphosphate to form N'-(5'-phosphoribosyl)-ATP (PR-ATP). Has a crucial role in the pathway because the rate of histidine biosynthesis seems to be controlled primarily by regulation of HisG enzymatic activity. The sequence is that of ATP phosphoribosyltransferase from Leptospira interrogans serogroup Icterohaemorrhagiae serovar Lai (strain 56601).